We begin with the raw amino-acid sequence, 490 residues long: Lignostilbene-alpha,beta-dioxygenase isozyme III (490 aa).

4 residues coordinate Fe cation: His167, His218, His285, and His477.

Belongs to the carotenoid oxygenase family. In terms of assembly, homodimer of two beta subunits. Requires Fe(2+) as cofactor.

The catalysed reaction is 1,2-bis(4-hydroxy-3-methoxyphenyl)ethylene + O2 = 2 vanillin. Activity is high with beta-5 type stilbene and minimal with beta-1 type stilbene. A 4-hydroxyl group and trans-stilbene structure is essential for the binding of substrates to the enzyme. Functionally, catalyzes the cleavage of the interphenyl double bond (C alpha-C beta) of lignin-derived polyphenolic diaryl-propane type compounds (Stilbene). In Sphingomonas paucimobilis (Pseudomonas paucimobilis), this protein is Lignostilbene-alpha,beta-dioxygenase isozyme III.